We begin with the raw amino-acid sequence, 176 residues long: Urease accessory protein UreE (176 aa).

Residues 147 to 176 (AGAYQQGGGHSHGHAHSHSHEKPHSHTHNH) are disordered.

The protein belongs to the UreE family.

Its subcellular location is the cytoplasm. In terms of biological role, involved in urease metallocenter assembly. Binds nickel. Probably functions as a nickel donor during metallocenter assembly. The polypeptide is Urease accessory protein UreE (Alcanivorax borkumensis (strain ATCC 700651 / DSM 11573 / NCIMB 13689 / SK2)).